Consider the following 267-residue polypeptide: MDLIYFIKAFFLGVIEGITEFLPISSTGHLILIGDWINFSSNEEKVFEVVIQLGGILAVCWLFRDKIINLINGVLKSDPVAQRFAVIVMISFLPSAIIGALFIHDIKNVLFNTTVVATALIVGGLIILWVENRKDSEKFKIENIEKIGFKQAIIIGIAQCIAMIPGTSRSGATIVGGMLSGVSRKAATEYSFFLAIPTMLGAAIYDASKNYHLLNTDDILAILIGFSAAFISALIVVNALIRFVAKHSLSVFAWYRIALGLIIFSVN.

8 helical membrane passes run 4-24 (IYFIKAFFLGVIEGITEFLPI), 43-63 (EEKVFEVVIQLGGILAVCWLF), 84-104 (FAVIVMISFLPSAIIGALFIH), 109-129 (VLFNTTVVATALIVGGLIILW), 147-167 (IGFKQAIIIGIAQCIAMIPGT), 186-206 (AATEYSFFLAIPTMLGAAIYD), 219-239 (ILAILIGFSAAFISALIVVNA), and 243-263 (FVAKHSLSVFAWYRIALGLII).

The protein belongs to the UppP family.

The protein resides in the cell inner membrane. It catalyses the reaction di-trans,octa-cis-undecaprenyl diphosphate + H2O = di-trans,octa-cis-undecaprenyl phosphate + phosphate + H(+). Its function is as follows. Catalyzes the dephosphorylation of undecaprenyl diphosphate (UPP). Confers resistance to bacitracin. In Shewanella oneidensis (strain ATCC 700550 / JCM 31522 / CIP 106686 / LMG 19005 / NCIMB 14063 / MR-1), this protein is Undecaprenyl-diphosphatase 2.